A 427-amino-acid polypeptide reads, in one-letter code: Glutamate-1-semialdehyde 2,1-aminomutase (427 aa).

Lys-264 is modified (N6-(pyridoxal phosphate)lysine).

This sequence belongs to the class-III pyridoxal-phosphate-dependent aminotransferase family. HemL subfamily. In terms of assembly, homodimer. Pyridoxal 5'-phosphate is required as a cofactor.

Its subcellular location is the cytoplasm. It carries out the reaction (S)-4-amino-5-oxopentanoate = 5-aminolevulinate. Its pathway is porphyrin-containing compound metabolism; protoporphyrin-IX biosynthesis; 5-aminolevulinate from L-glutamyl-tRNA(Glu): step 2/2. The sequence is that of Glutamate-1-semialdehyde 2,1-aminomutase from Clostridium botulinum (strain Alaska E43 / Type E3).